Here is a 491-residue protein sequence, read N- to C-terminus: Blue-light-activated histidine kinase (491 aa).

In terms of domain architecture, PAS 1 spans 19–92 (EANPFTAAVE…EIIHSALEAE (74 aa)). At Cys69 the chain carries S-4a-FMN cysteine. The PAC domain maps to 93-147 (QSVEIDILNYKKSGEPFWNRLHISPVKTENGELHHFVSSQLDVTLELGKLVELEK). The region spanning 159 to 230 (SSDQLQYIVE…QRSQESFATG (72 aa)) is the PAS 2 domain. The interval 286–368 (EISHRFKNSM…GHRIRTSGPE (83 aa)) is HWE histidine kinase domain. His289 carries the phosphohistidine; by autocatalysis modification.

FMN binds covalently to cysteine after exposure to blue light and this bond is spontaneously broken in the dark.

It catalyses the reaction ATP + protein L-histidine = ADP + protein N-phospho-L-histidine.. Functionally, photosensitive kinase that is involved in increased bacterial virulence upon exposure to light. This Brucella anthropi (strain ATCC 49188 / DSM 6882 / CCUG 24695 / JCM 21032 / LMG 3331 / NBRC 15819 / NCTC 12168 / Alc 37) (Ochrobactrum anthropi) protein is Blue-light-activated histidine kinase.